Here is a 479-residue protein sequence, read N- to C-terminus: Cardiolipin synthase A (479 aa).

The next 2 helical transmembrane spans lie at 8 to 28 (FFGY…LHAL) and 38 to 58 (IAWA…YLIF). 2 consecutive PLD phosphodiesterase domains span residues 218–245 (VNFR…GDEY) and 392–419 (QPGF…DNRS). Residues His223, Lys225, Asp230, His397, Lys399, and Asp404 contribute to the active site.

It belongs to the phospholipase D family. Cardiolipin synthase subfamily. ClsA sub-subfamily.

It is found in the cell inner membrane. The catalysed reaction is 2 a 1,2-diacyl-sn-glycero-3-phospho-(1'-sn-glycerol) = a cardiolipin + glycerol. In terms of biological role, catalyzes the reversible phosphatidyl group transfer from one phosphatidylglycerol molecule to another to form cardiolipin (CL) (diphosphatidylglycerol) and glycerol. In Pseudomonas putida (strain ATCC 700007 / DSM 6899 / JCM 31910 / BCRC 17059 / LMG 24140 / F1), this protein is Cardiolipin synthase A.